We begin with the raw amino-acid sequence, 537 residues long: Ataxin-10 homolog (537 aa).

It belongs to the ataxin-10 family.

The protein localises to the cytoplasm. In terms of biological role, may play a role in the regulation of cytokinesis. The protein is Ataxin-10 homolog (CTR86) of Kluyveromyces lactis (strain ATCC 8585 / CBS 2359 / DSM 70799 / NBRC 1267 / NRRL Y-1140 / WM37) (Yeast).